The primary structure comprises 117 residues: Probable prefoldin subunit 1 (117 aa).

This sequence belongs to the prefoldin subunit beta family. As to quaternary structure, heterohexamer of two PFD-alpha type and four PFD-beta type subunits.

It is found in the cytoplasm. Binds specifically to cytosolic chaperonin (c-CPN) and transfers target proteins to it. Binds to nascent polypeptide chain and promotes folding in an environment in which there are many competing pathways for nonnative proteins. Has a role in gonadogenesis. The polypeptide is Probable prefoldin subunit 1 (pfd-1) (Caenorhabditis briggsae).